Reading from the N-terminus, the 465-residue chain is Ribosomal protein uS12 methylthiotransferase RimO (465 aa).

The MTTase N-terminal domain occupies 1–117 (MKVGFISLGC…IVDICEGMPP (117 aa)). Cys-10, Cys-46, Cys-80, Cys-150, Cys-154, and Cys-157 together coordinate [4Fe-4S] cluster. The 234-residue stretch at 136-369 (ATPRHFAYMK…AIQRKIARAR (234 aa)) folds into the Radical SAM core domain. One can recognise a TRAM domain in the interval 371–442 (RGLVGKEVPV…DYDVVGTLLA (72 aa)).

It belongs to the methylthiotransferase family. RimO subfamily. [4Fe-4S] cluster serves as cofactor.

Its subcellular location is the cytoplasm. The enzyme catalyses L-aspartate(89)-[ribosomal protein uS12]-hydrogen + (sulfur carrier)-SH + AH2 + 2 S-adenosyl-L-methionine = 3-methylsulfanyl-L-aspartate(89)-[ribosomal protein uS12]-hydrogen + (sulfur carrier)-H + 5'-deoxyadenosine + L-methionine + A + S-adenosyl-L-homocysteine + 2 H(+). Its function is as follows. Catalyzes the methylthiolation of an aspartic acid residue of ribosomal protein uS12. This is Ribosomal protein uS12 methylthiotransferase RimO from Solibacter usitatus (strain Ellin6076).